We begin with the raw amino-acid sequence, 532 residues long: Pyruvate kinase (532 aa).

Arg-63 lines the substrate pocket. The K(+) site is built by Asn-65, Ser-67, Asp-99, and Thr-100. 65–68 (NFSH) is an ATP binding site. Positions 106 and 191 each coordinate ATP. Glu-256 is a binding site for Mg(2+). Substrate-binding residues include Gly-279, Asp-280, and Thr-312. Residue Asp-280 coordinates Mg(2+).

Belongs to the pyruvate kinase family. Homotetramer. Mg(2+) is required as a cofactor. K(+) serves as cofactor.

It carries out the reaction pyruvate + ATP = phosphoenolpyruvate + ADP + H(+). It participates in carbohydrate degradation; glycolysis; pyruvate from D-glyceraldehyde 3-phosphate: step 5/5. In Agaricus bisporus (White button mushroom), this protein is Pyruvate kinase (pkiA).